We begin with the raw amino-acid sequence, 153 residues long: uncharacterized protein (153 aa).

Residues M1–G22 form the signal peptide. C23 carries the N-palmitoyl cysteine lipid modification. A lipid anchor (S-diacylglycerol cysteine) is attached at C23.

The protein to L.monocytogenes lmo0207.

The protein localises to the cell membrane. This is an uncharacterized protein from Escherichia coli (strain K12).